The following is a 265-amino-acid chain: L-histidine 2-aminobutanoyltransferase (265 aa).

The protein belongs to the methyltransferase superfamily. CntL family.

It catalyses the reaction L-histidine + S-adenosyl-L-methionine = (2S)-2-amino-4-{[(1S)-1-carboxy-2-(1H-imidazol-4-yl)ethyl]amino}butanoate + S-methyl-5'-thioadenosine + H(+). Functionally, catalyzes the nucleophilic attack of one alpha-aminobutanoate moiety from SAM onto L-histidine to produce the intermediate (2S)-2-amino-4-{[(1S)-1-carboxy-2-(1H-imidazol-4-yl)ethyl]amino}butanoate. Functions in the biosynthesis of the metallophore yersinopine, which is involved in metal acquisition and thus enables bacterial growth inside the host, where metal access is limited. Therefore, this enzyme probably contributes to Yersinia virulence. The polypeptide is L-histidine 2-aminobutanoyltransferase (Yersinia pestis).